Reading from the N-terminus, the 377-residue chain is MMVIVLDNSNIRVVVGMSGGVDSSVTALLLKQQGYDVVGVFMKNWDDTDENGVCTATTDYEDVAKVASEIGIPYYSINFEKEYWDRVFQYFLDEYKAGRTPNPDVMCNKEIKFKAFLDYADQLNADYIAMGHYAQVKTDENGIVHMLRGADGNKDQTYFLSQLSQDQLKKSLFPIGHLQKPEVRKIAEAAGLATAKKKDSTGICFIGERNFKQFLSTYLPAQPGKMMTVDGVEMGTHDGLMYYTIGQRQGLGIGGNSDNSEPWFVVGKDLDKNILYVGQGFDNPALMATSLSASNLNWTTGQAPAEGTHMTAKFRYRQRDTGVTLHYHDDGTATVDFDVPVRAITPGQAVVFYDGDECLGGGTIDAAYAHTNELQYV.

ATP contacts are provided by residues 16 to 23 (GMSGGVDS) and Met-42. Residues 102–104 (NPD) are interaction with target base in tRNA. The Nucleophile role is filled by Cys-107. Residues Cys-107 and Cys-204 are joined by a disulfide bond. ATP is bound at residue Gly-131. The segment at 154–156 (KDQ) is interaction with tRNA. The active-site Cysteine persulfide intermediate is the Cys-204. An interaction with tRNA region spans residues 315–316 (RY).

Belongs to the MnmA/TRMU family.

The protein resides in the cytoplasm. The enzyme catalyses S-sulfanyl-L-cysteinyl-[protein] + uridine(34) in tRNA + AH2 + ATP = 2-thiouridine(34) in tRNA + L-cysteinyl-[protein] + A + AMP + diphosphate + H(+). In terms of biological role, catalyzes the 2-thiolation of uridine at the wobble position (U34) of tRNA, leading to the formation of s(2)U34. The sequence is that of tRNA-specific 2-thiouridylase MnmA from Lacticaseibacillus paracasei (strain ATCC 334 / BCRC 17002 / CCUG 31169 / CIP 107868 / KCTC 3260 / NRRL B-441) (Lactobacillus paracasei).